The chain runs to 261 residues: Triosephosphate isomerase (261 aa).

Residue 10–12 participates in substrate binding; it reads NWK. The active-site Electrophile is His100. The active-site Proton acceptor is Glu172. Substrate contacts are provided by residues Gly178, Ser218, and 239–240; that span reads GG.

The protein belongs to the triosephosphate isomerase family. Homodimer.

The protein resides in the cytoplasm. It catalyses the reaction D-glyceraldehyde 3-phosphate = dihydroxyacetone phosphate. It functions in the pathway carbohydrate biosynthesis; gluconeogenesis. It participates in carbohydrate degradation; glycolysis; D-glyceraldehyde 3-phosphate from glycerone phosphate: step 1/1. Functionally, involved in the gluconeogenesis. Catalyzes stereospecifically the conversion of dihydroxyacetone phosphate (DHAP) to D-glyceraldehyde-3-phosphate (G3P). The protein is Triosephosphate isomerase of Mycobacterium sp. (strain JLS).